We begin with the raw amino-acid sequence, 100 residues long: Aspartyl/glutamyl-tRNA(Asn/Gln) amidotransferase subunit C (100 aa).

Belongs to the GatC family. Heterotrimer of A, B and C subunits.

The catalysed reaction is L-glutamyl-tRNA(Gln) + L-glutamine + ATP + H2O = L-glutaminyl-tRNA(Gln) + L-glutamate + ADP + phosphate + H(+). It catalyses the reaction L-aspartyl-tRNA(Asn) + L-glutamine + ATP + H2O = L-asparaginyl-tRNA(Asn) + L-glutamate + ADP + phosphate + 2 H(+). Its function is as follows. Allows the formation of correctly charged Asn-tRNA(Asn) or Gln-tRNA(Gln) through the transamidation of misacylated Asp-tRNA(Asn) or Glu-tRNA(Gln) in organisms which lack either or both of asparaginyl-tRNA or glutaminyl-tRNA synthetases. The reaction takes place in the presence of glutamine and ATP through an activated phospho-Asp-tRNA(Asn) or phospho-Glu-tRNA(Gln). This is Aspartyl/glutamyl-tRNA(Asn/Gln) amidotransferase subunit C from Staphylococcus haemolyticus (strain JCSC1435).